A 244-amino-acid chain; its full sequence is 7-cyano-7-deazaguanine synthase (244 aa).

Phenylalanine 14 to valine 24 is a binding site for ATP. Positions 202, 217, 220, and 223 each coordinate Zn(2+).

This sequence belongs to the QueC family. Requires Zn(2+) as cofactor.

The enzyme catalyses 7-carboxy-7-deazaguanine + NH4(+) + ATP = 7-cyano-7-deazaguanine + ADP + phosphate + H2O + H(+). Its pathway is purine metabolism; 7-cyano-7-deazaguanine biosynthesis. Functionally, catalyzes the ATP-dependent conversion of 7-carboxy-7-deazaguanine (CDG) to 7-cyano-7-deazaguanine (preQ(0)). The protein is 7-cyano-7-deazaguanine synthase of Burkholderia lata (strain ATCC 17760 / DSM 23089 / LMG 22485 / NCIMB 9086 / R18194 / 383).